The sequence spans 365 residues: DNA replication and repair protein RecF (365 aa).

30-37 is a binding site for ATP; sequence GRNAQGKT.

This sequence belongs to the RecF family.

Its subcellular location is the cytoplasm. The RecF protein is involved in DNA metabolism; it is required for DNA replication and normal SOS inducibility. RecF binds preferentially to single-stranded, linear DNA. It also seems to bind ATP. The chain is DNA replication and repair protein RecF from Streptococcus pneumoniae (strain 70585).